Here is a 92-residue protein sequence, read N- to C-terminus: Defensin-like protein 226 (92 aa).

Positions 1–27 (MKCGVLFMISCLLITFLVLSHVREVES) are cleaved as a signal peptide. Intrachain disulfides connect Cys33–Cys92, Cys43–Cys71, Cys51–Cys86, and Cys69–Cys88.

This sequence belongs to the DEFL family.

The protein localises to the secreted. The polypeptide is Defensin-like protein 226 (SCRL2) (Arabidopsis thaliana (Mouse-ear cress)).